A 611-amino-acid chain; its full sequence is Nuclear cap-binding protein subunit 3 (611 aa).

A disordered region spans residues 1–44 (MAAVRGLRVSVKAGGGAEPEPMEVEEGEVEAAADRASPREVVSG). A compositionally biased stretch (acidic residues) spans 20–31 (EPMEVEEGEVEA). An RNA recognition motif (RRM) domain region spans residues 108 to 169 (ETLYVYGVDD…LSSMPTNEKG (62 aa)). The short motif at 137 to 140 (WLDD) is the WLDD motif; essential for 7-methylguanosine-containing mRNA cap binding element. Disordered regions lie at residues 159–230 (NLSS…PDTL), 338–360 (EEPI…DDRV), 373–393 (RERE…EMDY), 423–568 (KTIR…DSVL), and 583–611 (RQKK…DTDS). Residues 168 to 179 (KGQRKKDGEHSS) show a composition bias toward basic and acidic residues. Acidic residues-rich tracts occupy residues 196-218 (DETE…DETE) and 339-358 (EPIE…DEDD). The segment covering 423-439 (KTIRNSMRSDSVGNSVK) has biased composition (polar residues). The span at 446 to 463 (SHAEKPADVRLILEEKRQ) shows a compositional bias: basic and acidic residues. Positions 464-475 (STASRQQSSSGK) are enriched in low complexity. Composition is skewed to basic and acidic residues over residues 501 to 511 (SRREPLSDVHS) and 544 to 556 (PKDK…KSEK). A compositionally biased stretch (low complexity) spans 602 to 611 (ESSSGSDTDS).

Belongs to the NCBP3 family. As to quaternary structure, component of an alternative cap-binding complex (CBC) composed of NCBP1/CBP80 and NCBP3.

The protein localises to the nucleus. The protein resides in the cytoplasm. Its function is as follows. Associates with NCBP1/CBP80 to form an alternative cap-binding complex (CBC) which plays a key role in mRNA export. NCBP3 serves as adapter protein linking the capped RNAs (m7GpppG-capped RNA) to NCBP1/CBP80. Unlike the conventional CBC with NCBP2 which binds both small nuclear RNA (snRNA) and messenger (mRNA) and is involved in their export from the nucleus, the alternative CBC with NCBP3 does not bind snRNA and associates only with mRNA thereby playing a role in only mRNA export. The protein is Nuclear cap-binding protein subunit 3 of Xenopus tropicalis (Western clawed frog).